The chain runs to 87 residues: Small ribosomal subunit protein bS20 (87 aa).

The segment at 1 to 26 (MANIKSAKKRAIQSEKRRKHNASRRS) is disordered.

The protein belongs to the bacterial ribosomal protein bS20 family.

Its function is as follows. Binds directly to 16S ribosomal RNA. In Photorhabdus laumondii subsp. laumondii (strain DSM 15139 / CIP 105565 / TT01) (Photorhabdus luminescens subsp. laumondii), this protein is Small ribosomal subunit protein bS20.